The primary structure comprises 89 residues: UPF0367 protein CYB_2632 (89 aa).

The tract at residues 69-89 (SKSGSASPMGTRPGFLAQLQS) is disordered.

This sequence belongs to the UPF0367 family.

This Synechococcus sp. (strain JA-2-3B'a(2-13)) (Cyanobacteria bacterium Yellowstone B-Prime) protein is UPF0367 protein CYB_2632.